The chain runs to 148 residues: Snaclec 6 (148 aa).

The first 23 residues, 1 to 23 (MGRFIFVSFGLLVMFLSLSGTEA), serve as a signal peptide directing secretion. Intrachain disulfides connect C27/C38, C55/C144, and C121/C136. Positions 34 to 145 (YDQNCYKAFE…CSGTHNFVCK (112 aa)) constitute a C-type lectin domain. N130 is a glycosylation site (N-linked (GlcNAc...) asparagine).

It belongs to the snaclec family. Heterodimer; disulfide-linked. Expressed by the venom gland.

The protein resides in the secreted. In terms of biological role, interferes with one step of hemostasis (modulation of platelet aggregation, or coagulation cascade, for example). This is Snaclec 6 from Bitis arietans (African puff adder).